Consider the following 239-residue polypeptide: Adapter protein MecA (239 aa).

Positions 118–128 are enriched in basic and acidic residues; sequence EQRTKEKEAQG. Residues 118–137 are disordered; the sequence is EQRTKEKEAQGSKRQKSSAR.

Belongs to the MecA family. Homodimer.

Its function is as follows. Enables the recognition and targeting of unfolded and aggregated proteins to the ClpC protease or to other proteins involved in proteolysis. This is Adapter protein MecA from Staphylococcus aureus (strain COL).